We begin with the raw amino-acid sequence, 723 residues long: Methionine--tRNA ligase (723 aa).

Positions 12 to 22 (PYANGDIHLGH) match the 'HIGH' region motif. Residues cysteine 143, cysteine 146, cysteine 156, and cysteine 159 each contribute to the Zn(2+) site. Residues 345 to 349 (KMSKS) carry the 'KMSKS' region motif. Residue lysine 348 coordinates ATP. Residues 568–604 (PAAATAPAKDAKPAKEAGSQQRHAEKQQHAAGVSETA) form a disordered region. Residues 612–723 (DFTKVDLRIA…EGAQAGMRVK (112 aa)) form the tRNA-binding domain.

The protein belongs to the class-I aminoacyl-tRNA synthetase family. MetG type 1 subfamily. Homodimer. Zn(2+) is required as a cofactor.

The protein localises to the cytoplasm. It carries out the reaction tRNA(Met) + L-methionine + ATP = L-methionyl-tRNA(Met) + AMP + diphosphate. In terms of biological role, is required not only for elongation of protein synthesis but also for the initiation of all mRNA translation through initiator tRNA(fMet) aminoacylation. The chain is Methionine--tRNA ligase from Azoarcus sp. (strain BH72).